The sequence spans 420 residues: Glucose-1-phosphate adenylyltransferase (420 aa).

Alpha-D-glucose 1-phosphate is bound by residues Tyr-107, Gly-173, 188–189 (EK), and Ser-206.

This sequence belongs to the bacterial/plant glucose-1-phosphate adenylyltransferase family. As to quaternary structure, homotetramer.

It catalyses the reaction alpha-D-glucose 1-phosphate + ATP + H(+) = ADP-alpha-D-glucose + diphosphate. Its pathway is glycan biosynthesis; glycogen biosynthesis. In terms of biological role, involved in the biosynthesis of ADP-glucose, a building block required for the elongation reactions to produce glycogen. Catalyzes the reaction between ATP and alpha-D-glucose 1-phosphate (G1P) to produce pyrophosphate and ADP-Glc. This is Glucose-1-phosphate adenylyltransferase from Shewanella baltica (strain OS155 / ATCC BAA-1091).